The chain runs to 89 residues: UPF0237 protein Cgl1544/cg1742 (89 aa).

The 79-residue stretch at 4 to 82 (IMTVTGQDHT…LVIRIQSEAL (79 aa)) folds into the ACT domain.

Belongs to the UPF0237 family.

The chain is UPF0237 protein Cgl1544/cg1742 from Corynebacterium glutamicum (strain ATCC 13032 / DSM 20300 / JCM 1318 / BCRC 11384 / CCUG 27702 / LMG 3730 / NBRC 12168 / NCIMB 10025 / NRRL B-2784 / 534).